The primary structure comprises 118 residues: Ribosomal silencing factor RsfS (118 aa).

Belongs to the Iojap/RsfS family. In terms of assembly, interacts with ribosomal protein uL14 (rplN).

It is found in the cytoplasm. In terms of biological role, functions as a ribosomal silencing factor. Interacts with ribosomal protein uL14 (rplN), blocking formation of intersubunit bridge B8. Prevents association of the 30S and 50S ribosomal subunits and the formation of functional ribosomes, thus repressing translation. The sequence is that of Ribosomal silencing factor RsfS from Bacillus subtilis (strain 168).